A 95-amino-acid chain; its full sequence is Aspartyl/glutamyl-tRNA(Asn/Gln) amidotransferase subunit C (95 aa).

Belongs to the GatC family. Heterotrimer of A, B and C subunits.

The enzyme catalyses L-glutamyl-tRNA(Gln) + L-glutamine + ATP + H2O = L-glutaminyl-tRNA(Gln) + L-glutamate + ADP + phosphate + H(+). It carries out the reaction L-aspartyl-tRNA(Asn) + L-glutamine + ATP + H2O = L-asparaginyl-tRNA(Asn) + L-glutamate + ADP + phosphate + 2 H(+). In terms of biological role, allows the formation of correctly charged Asn-tRNA(Asn) or Gln-tRNA(Gln) through the transamidation of misacylated Asp-tRNA(Asn) or Glu-tRNA(Gln) in organisms which lack either or both of asparaginyl-tRNA or glutaminyl-tRNA synthetases. The reaction takes place in the presence of glutamine and ATP through an activated phospho-Asp-tRNA(Asn) or phospho-Glu-tRNA(Gln). The protein is Aspartyl/glutamyl-tRNA(Asn/Gln) amidotransferase subunit C of Rhodopseudomonas palustris (strain ATCC BAA-98 / CGA009).